The chain runs to 391 residues: Elongation factor Tu (391 aa).

In terms of domain architecture, tr-type G spans 10–201 (KPHVNIGTIG…AVDDYIPTPE (192 aa)). The interval 19 to 26 (GHVDHGKT) is G1. Position 19-26 (19-26 (GHVDHGKT)) interacts with GTP. Mg(2+) is bound at residue threonine 26. Positions 55 to 59 (GITIS) are G2. Residues 76 to 79 (DCPG) form a G3 region. GTP contacts are provided by residues 76-80 (DCPGH) and 131-134 (NKCD). Residues 131–134 (NKCD) form a G4 region. Residues 169–171 (SAL) form a G5 region.

It belongs to the TRAFAC class translation factor GTPase superfamily. Classic translation factor GTPase family. EF-Tu/EF-1A subfamily. In terms of assembly, monomer.

It is found in the cytoplasm. The catalysed reaction is GTP + H2O = GDP + phosphate + H(+). GTP hydrolase that promotes the GTP-dependent binding of aminoacyl-tRNA to the A-site of ribosomes during protein biosynthesis. The chain is Elongation factor Tu from Brucella anthropi (strain ATCC 49188 / DSM 6882 / CCUG 24695 / JCM 21032 / LMG 3331 / NBRC 15819 / NCTC 12168 / Alc 37) (Ochrobactrum anthropi).